A 405-amino-acid polypeptide reads, in one-letter code: L-carnitine CoA-transferase (405 aa).

Residues K97 and R104 each coordinate CoA. D169 acts as the Nucleophile in catalysis.

This sequence belongs to the CoA-transferase III family. CaiB subfamily. In terms of assembly, homodimer.

It localises to the cytoplasm. It carries out the reaction crotonobetainyl-CoA + (R)-carnitine = crotonobetaine + (R)-carnitinyl-CoA. The catalysed reaction is 4-(trimethylamino)butanoyl-CoA + (R)-carnitine = (R)-carnitinyl-CoA + 4-(trimethylamino)butanoate. It participates in amine and polyamine metabolism; carnitine metabolism. Its function is as follows. Catalyzes the reversible transfer of the CoA moiety from gamma-butyrobetainyl-CoA to L-carnitine to generate L-carnitinyl-CoA and gamma-butyrobetaine. Is also able to catalyze the reversible transfer of the CoA moiety from gamma-butyrobetainyl-CoA or L-carnitinyl-CoA to crotonobetaine to generate crotonobetainyl-CoA. The protein is L-carnitine CoA-transferase of Escherichia coli (strain SE11).